A 574-amino-acid polypeptide reads, in one-letter code: Alpha-mannosidase I MNS5 (574 aa).

The Cytoplasmic portion of the chain corresponds to 1 to 9 (MSCPIHPRR). Residues 10–26 (LFLCLLISLTFFVVDPS) form a helical; Signal-anchor for type II membrane protein membrane-spanning segment. The Lumenal portion of the chain corresponds to 27–574 (SQHIEVKKKQ…VGYCGLWNPL (548 aa)). Residues asparagine 89, asparagine 107, and asparagine 121 are each glycosylated (N-linked (GlcNAc...) asparagine). Glutamate 134 serves as the catalytic Proton donor. A glycan (N-linked (GlcNAc...) asparagine) is linked at asparagine 201. Residue aspartate 274 is part of the active site. An N-linked (GlcNAc...) asparagine glycan is attached at asparagine 349. Glutamate 367 (proton donor) is an active-site residue. Residue glutamate 388 is part of the active site. Threonine 471 is a binding site for Ca(2+). Asparagine 494 carries an N-linked (GlcNAc...) asparagine glycan.

Belongs to the glycosyl hydrolase 47 family. Requires Ca(2+) as cofactor.

The protein resides in the endoplasmic reticulum membrane. Its pathway is protein modification; protein glycosylation. Functionally, can convert Man(9)GlcNAc(2) and Man(8)GlcNAc(2) into N-glycans with a terminal alpha-1,6-linked Man residue in the C-branch. Functions in the formation of unique N-glycan structures that are specifically recognized by components of the endoplasmic reticulum-associated degradation (ERAD) machinery, which leads to the degradation of misfolded glycoproteins. Most likely generates N-glycan signal on misfolded glycoproteins that is subsequently recognized by OS9. Required for ERAD of the heavily glycosylated and misfolded BRI1 variants BRI1-5 and BRI1-9. Does not seem to play role in N-glycan processing of correctly folded proteins destined for secretion. The sequence is that of Alpha-mannosidase I MNS5 (MNS5) from Arabidopsis thaliana (Mouse-ear cress).